The sequence spans 226 residues: Putative N-acetylmannosamine-6-phosphate 2-epimerase 1 (226 aa).

Belongs to the NanE family.

It catalyses the reaction an N-acyl-D-glucosamine 6-phosphate = an N-acyl-D-mannosamine 6-phosphate. It participates in amino-sugar metabolism; N-acetylneuraminate degradation; D-fructose 6-phosphate from N-acetylneuraminate: step 3/5. Its function is as follows. Converts N-acetylmannosamine-6-phosphate (ManNAc-6-P) to N-acetylglucosamine-6-phosphate (GlcNAc-6-P). The protein is Putative N-acetylmannosamine-6-phosphate 2-epimerase 1 of Salmonella paratyphi A (strain ATCC 9150 / SARB42).